A 749-amino-acid chain; its full sequence is Protein phosphatase 1E (749 aa).

Residues Glu-21–Leu-128 are disordered. Tandem repeats lie at residues Pro-31–Glu-32, Pro-33–Glu-34, and Pro-35–Glu-36. A 7 X 2 AA tandem repeats of P-E region spans residues Pro-31–Glu-44. Residues Pro-31–Ala-45 show a composition bias toward acidic residues. The 4; approximate repeat unit spans residues Ser-37 to Glu-38. Tandem repeats lie at residues Pro-39–Glu-40, Pro-41–Glu-42, and Pro-43–Glu-44. Residues Glu-46–Ala-55 are compositionally biased toward low complexity. A compositionally biased stretch (acidic residues) spans Ala-69–Ala-102. Positions Val-110–Arg-126 are enriched in pro residues. The region spanning Gln-224 to Leu-485 is the PPM-type phosphatase domain. Positions 270, 271, 432, and 476 each coordinate Mn(2+). A disordered region spans residues Ser-495–Leu-537. Basic and acidic residues predominate over residues Asp-515–Arg-524. A phosphoserine mark is found at Ser-532 and Ser-545. A disordered region spans residues Val-608–Leu-627.

This sequence belongs to the PP2C family. Heterotrimer. Interacts with PAX1 and ARHGEF6 (or ARHGEF7). Mg(2+) serves as cofactor. Mn(2+) is required as a cofactor.

It is found in the nucleus. The protein resides in the cytoplasm. The catalysed reaction is O-phospho-L-seryl-[protein] + H2O = L-seryl-[protein] + phosphate. The enzyme catalyses O-phospho-L-threonyl-[protein] + H2O = L-threonyl-[protein] + phosphate. Functionally, protein phosphatase that inactivates multifunctional CaM kinases such as CAMK4 and CAMK2. Dephosphorylates and inactivates PAK. May play a role in the inhibition of actin fiber stress breakdown and in morphological changes driven by TNK2/CDC42. Dephosphorylates PRKAA2. This Mus musculus (Mouse) protein is Protein phosphatase 1E (Ppm1e).